Reading from the N-terminus, the 95-residue chain is Aspartyl/glutamyl-tRNA(Asn/Gln) amidotransferase subunit C (95 aa).

This sequence belongs to the GatC family. Heterotrimer of A, B and C subunits.

The catalysed reaction is L-glutamyl-tRNA(Gln) + L-glutamine + ATP + H2O = L-glutaminyl-tRNA(Gln) + L-glutamate + ADP + phosphate + H(+). It catalyses the reaction L-aspartyl-tRNA(Asn) + L-glutamine + ATP + H2O = L-asparaginyl-tRNA(Asn) + L-glutamate + ADP + phosphate + 2 H(+). Allows the formation of correctly charged Asn-tRNA(Asn) or Gln-tRNA(Gln) through the transamidation of misacylated Asp-tRNA(Asn) or Glu-tRNA(Gln) in organisms which lack either or both of asparaginyl-tRNA or glutaminyl-tRNA synthetases. The reaction takes place in the presence of glutamine and ATP through an activated phospho-Asp-tRNA(Asn) or phospho-Glu-tRNA(Gln). The polypeptide is Aspartyl/glutamyl-tRNA(Asn/Gln) amidotransferase subunit C (Methylobacillus flagellatus (strain ATCC 51484 / DSM 6875 / VKM B-1610 / KT)).